The sequence spans 343 residues: NADH-ubiquinone oxidoreductase chain 2 (343 aa).

8 helical membrane passes run 1–21 (MNPM…TMIT), 59–81 (YYLI…ALNT), 96–116 (TIIT…SWLP), 150–170 (NITL…LGSL), 178–198 (LMAF…TMAP), 200–220 (ISTL…LLIN), 241–261 (MTIL…SGFM), and 270–290 (LISM…LLSL).

The protein belongs to the complex I subunit 2 family.

The protein localises to the mitochondrion inner membrane. It carries out the reaction a ubiquinone + NADH + 5 H(+)(in) = a ubiquinol + NAD(+) + 4 H(+)(out). Core subunit of the mitochondrial membrane respiratory chain NADH dehydrogenase (Complex I) that is believed to belong to the minimal assembly required for catalysis. Complex I functions in the transfer of electrons from NADH to the respiratory chain. The immediate electron acceptor for the enzyme is believed to be ubiquinone. The chain is NADH-ubiquinone oxidoreductase chain 2 (MT-ND2) from Lycodon semicarinatus (Ryukyu odd-tooth snake).